The following is a 218-amino-acid chain: LexA repressor (218 aa).

The segment at residues 28–48 (RAEIAAEFGFSSPNAAEEHLR) is a DNA-binding region (H-T-H motif). Active-site for autocatalytic cleavage activity residues include Ser-136 and Lys-173.

This sequence belongs to the peptidase S24 family. In terms of assembly, homodimer.

The enzyme catalyses Hydrolysis of Ala-|-Gly bond in repressor LexA.. Represses a number of genes involved in the response to DNA damage (SOS response), including recA and lexA. In the presence of single-stranded DNA, RecA interacts with LexA causing an autocatalytic cleavage which disrupts the DNA-binding part of LexA, leading to derepression of the SOS regulon and eventually DNA repair. The protein is LexA repressor of Cupriavidus pinatubonensis (strain JMP 134 / LMG 1197) (Cupriavidus necator (strain JMP 134)).